The sequence spans 215 residues: Probable phosphoglycerate mutase GpmB (215 aa).

Substrate is bound by residues 8–15, 21–22, arginine 58, 82–85, and 151–152; these read RHGETVWN, QG, ELNM, and GM. Catalysis depends on histidine 9, which acts as the Tele-phosphohistidine intermediate. Glutamate 82 serves as the catalytic Proton donor/acceptor.

Belongs to the phosphoglycerate mutase family. GpmB subfamily.

The catalysed reaction is (2R)-2-phosphoglycerate = (2R)-3-phosphoglycerate. The protein operates within carbohydrate degradation; glycolysis; pyruvate from D-glyceraldehyde 3-phosphate: step 3/5. The sequence is that of Probable phosphoglycerate mutase GpmB from Yersinia enterocolitica serotype O:8 / biotype 1B (strain NCTC 13174 / 8081).